The chain runs to 348 residues: GMP reductase 2 (348 aa).

Residues 26 to 27 (SR), K78, 129 to 131 (DVA), and 180 to 181 (IG) each bind NADP(+). Residues G181, G183, and C186 each coordinate K(+). The active-site Thioimidate intermediate is the C186. Catalysis depends on T188, which acts as the Proton donor/acceptor. R189 contacts K(+). GMP contacts are provided by residues 219-221 (DGG), 242-243 (GG), 268-270 (GMS), and 286-290 (RASEG). Residues M269 and 285 to 286 (YR) each bind NADP(+). K291 bears the N6-acetyllysine mark. 314 to 317 (STCT) serves as a coordination point for NADP(+).

Belongs to the IMPDH/GMPR family. GuaC type 1 subfamily. Homotetramer.

The enzyme catalyses IMP + NH4(+) + NADP(+) = GMP + NADPH + 2 H(+). Catalyzes the irreversible NADPH-dependent deamination of GMP to IMP. It functions in the conversion of nucleobase, nucleoside and nucleotide derivatives of G to A nucleotides, and in maintaining the intracellular balance of A and G nucleotides. Plays a role in modulating cellular differentiation. The protein is GMP reductase 2 of Bos taurus (Bovine).